We begin with the raw amino-acid sequence, 236 residues long: Small ribosomal subunit protein uS3 (236 aa).

Positions 39-107 (IRSYVMEELK…ETSLNIVEIR (69 aa)) constitute a KH type-2 domain. The tract at residues 214 to 236 (ASEHRATRNDNSSSSLNRRRESV) is disordered.

This sequence belongs to the universal ribosomal protein uS3 family. In terms of assembly, part of the 30S ribosomal subunit. Forms a tight complex with proteins S10 and S14.

Functionally, binds the lower part of the 30S subunit head. Binds mRNA in the 70S ribosome, positioning it for translation. This Bartonella bacilliformis (strain ATCC 35685 / KC583 / Herrer 020/F12,63) protein is Small ribosomal subunit protein uS3.